The primary structure comprises 214 residues: ATP-dependent Clp protease proteolytic subunit 3 (214 aa).

The active-site Nucleophile is S106. H131 is an active-site residue.

It belongs to the peptidase S14 family. In terms of assembly, fourteen ClpP subunits assemble into 2 heptameric rings which stack back to back to give a disk-like structure with a central cavity, resembling the structure of eukaryotic proteasomes.

Its subcellular location is the cytoplasm. It carries out the reaction Hydrolysis of proteins to small peptides in the presence of ATP and magnesium. alpha-casein is the usual test substrate. In the absence of ATP, only oligopeptides shorter than five residues are hydrolyzed (such as succinyl-Leu-Tyr-|-NHMec, and Leu-Tyr-Leu-|-Tyr-Trp, in which cleavage of the -Tyr-|-Leu- and -Tyr-|-Trp bonds also occurs).. Functionally, cleaves peptides in various proteins in a process that requires ATP hydrolysis. Has a chymotrypsin-like activity. Plays a major role in the degradation of misfolded proteins. In Trichormus variabilis (strain ATCC 29413 / PCC 7937) (Anabaena variabilis), this protein is ATP-dependent Clp protease proteolytic subunit 3.